The primary structure comprises 146 residues: MTIKLHDLQPARGSKTTRTRVGRGEASKGKTAGRGTKGTKARKQVPVTFEGGQMPIHMRLPKLKGFRNRLRTEYAVVNVGDISRLFPEGGTISVNDLVAKKAIRKNSLVKILGDGKLTVKVTLSAHKFSGSARHKITVAGGSVTEL.

Positions 1 to 42 are disordered; sequence MTIKLHDLQPARGSKTTRTRVGRGEASKGKTAGRGTKGTKAR.

It belongs to the universal ribosomal protein uL15 family. In terms of assembly, part of the 50S ribosomal subunit.

Functionally, binds to the 23S rRNA. The chain is Large ribosomal subunit protein uL15 from Mycobacterium leprae (strain Br4923).